An 84-amino-acid chain; its full sequence is Beta-defensin 119 (84 aa).

The signal sequence occupies residues 1–21; it reads MKLLYLFLAILLAIEEPVISG. 3 cysteine pairs are disulfide-bonded: cysteine 28–cysteine 55, cysteine 35–cysteine 49, and cysteine 39–cysteine 56.

This sequence belongs to the beta-defensin family.

The protein resides in the secreted. Its function is as follows. Has antibacterial activity. This is Beta-defensin 119 (DEFB119) from Hylobates lar (Lar gibbon).